We begin with the raw amino-acid sequence, 82 residues long: uncharacterized protein (82 aa).

Residues 29–38 (TATKSTSSGS) are compositionally biased toward low complexity. The disordered stretch occupies residues 29–64 (TATKSTSSGSVPSFFTESTSTPLNQSKTNTSTLNKS). Residues 39-50 (VPSFFTESTSTP) are compositionally biased toward polar residues. Positions 51-64 (LNQSKTNTSTLNKS) are enriched in low complexity.

This is an uncharacterized protein from Dictyostelium discoideum (Social amoeba).